Reading from the N-terminus, the 180-residue chain is Crossover junction endodeoxyribonuclease RuvC (180 aa).

Residues D7, E66, and D138 contribute to the active site. Residues D7, E66, and D138 each contribute to the Mg(2+) site.

It belongs to the RuvC family. As to quaternary structure, homodimer which binds Holliday junction (HJ) DNA. The HJ becomes 2-fold symmetrical on binding to RuvC with unstacked arms; it has a different conformation from HJ DNA in complex with RuvA. In the full resolvosome a probable DNA-RuvA(4)-RuvB(12)-RuvC(2) complex forms which resolves the HJ. Mg(2+) serves as cofactor.

The protein localises to the cytoplasm. The catalysed reaction is Endonucleolytic cleavage at a junction such as a reciprocal single-stranded crossover between two homologous DNA duplexes (Holliday junction).. Its function is as follows. The RuvA-RuvB-RuvC complex processes Holliday junction (HJ) DNA during genetic recombination and DNA repair. Endonuclease that resolves HJ intermediates. Cleaves cruciform DNA by making single-stranded nicks across the HJ at symmetrical positions within the homologous arms, yielding a 5'-phosphate and a 3'-hydroxyl group; requires a central core of homology in the junction. The consensus cleavage sequence is 5'-(A/T)TT(C/G)-3'. Cleavage occurs on the 3'-side of the TT dinucleotide at the point of strand exchange. HJ branch migration catalyzed by RuvA-RuvB allows RuvC to scan DNA until it finds its consensus sequence, where it cleaves and resolves the cruciform DNA. The sequence is that of Crossover junction endodeoxyribonuclease RuvC from Burkholderia pseudomallei (strain 1710b).